A 697-amino-acid chain; its full sequence is Potassium-transporting ATPase ATP-binding subunit (697 aa).

A run of 4 helical transmembrane segments spans residues proline 55–serine 75, glycine 82–alanine 102, leucine 245–phenylalanine 265, and valine 271–isoleucine 291. Aspartate 324 serves as the catalytic 4-aspartylphosphate intermediate. Residues aspartate 361, glutamate 365, phenylalanine 393–serine 400, and lysine 412 each bind ATP. Aspartate 535 and aspartate 539 together coordinate Mg(2+). Helical transmembrane passes span phenylalanine 605–methionine 625, alanine 633–methionine 653, and glycine 677–isoleucine 697.

This sequence belongs to the cation transport ATPase (P-type) (TC 3.A.3) family. Type IA subfamily. The system is composed of three essential subunits: KdpA, KdpB and KdpC.

It is found in the cell membrane. The enzyme catalyses K(+)(out) + ATP + H2O = K(+)(in) + ADP + phosphate + H(+). Its function is as follows. Part of the high-affinity ATP-driven potassium transport (or Kdp) system, which catalyzes the hydrolysis of ATP coupled with the electrogenic transport of potassium into the cytoplasm. This subunit is responsible for energy coupling to the transport system and for the release of the potassium ions to the cytoplasm. The sequence is that of Potassium-transporting ATPase ATP-binding subunit from Bacillus cereus (strain AH187).